Reading from the N-terminus, the 455-residue chain is Serine--tRNA ligase (455 aa).

L-serine is bound at residue 252–254 (TAE). Residues 283–285 (RKE) and V299 each bind ATP. E306 is a binding site for L-serine. 370–373 (EVVS) provides a ligand contact to ATP. T406 contacts L-serine.

The protein belongs to the class-II aminoacyl-tRNA synthetase family. Type-1 seryl-tRNA synthetase subfamily. In terms of assembly, homodimer. The tRNA molecule binds across the dimer.

Its subcellular location is the cytoplasm. It catalyses the reaction tRNA(Ser) + L-serine + ATP = L-seryl-tRNA(Ser) + AMP + diphosphate + H(+). It carries out the reaction tRNA(Sec) + L-serine + ATP = L-seryl-tRNA(Sec) + AMP + diphosphate + H(+). The protein operates within aminoacyl-tRNA biosynthesis; selenocysteinyl-tRNA(Sec) biosynthesis; L-seryl-tRNA(Sec) from L-serine and tRNA(Sec): step 1/1. Its function is as follows. Catalyzes the attachment of serine to tRNA(Ser). Is also able to aminoacylate tRNA(Sec) with serine, to form the misacylated tRNA L-seryl-tRNA(Sec), which will be further converted into selenocysteinyl-tRNA(Sec). This Pyrococcus horikoshii (strain ATCC 700860 / DSM 12428 / JCM 9974 / NBRC 100139 / OT-3) protein is Serine--tRNA ligase.